The sequence spans 321 residues: Lipoyl synthase (321 aa).

[4Fe-4S] cluster is bound by residues C68, C73, C79, C94, C98, C101, and S308. Positions 80-297 (FNHGTATFMI…REFAESIGFT (218 aa)) constitute a Radical SAM core domain.

It belongs to the radical SAM superfamily. Lipoyl synthase family. Requires [4Fe-4S] cluster as cofactor.

It localises to the cytoplasm. It carries out the reaction [[Fe-S] cluster scaffold protein carrying a second [4Fe-4S](2+) cluster] + N(6)-octanoyl-L-lysyl-[protein] + 2 oxidized [2Fe-2S]-[ferredoxin] + 2 S-adenosyl-L-methionine + 4 H(+) = [[Fe-S] cluster scaffold protein] + N(6)-[(R)-dihydrolipoyl]-L-lysyl-[protein] + 4 Fe(3+) + 2 hydrogen sulfide + 2 5'-deoxyadenosine + 2 L-methionine + 2 reduced [2Fe-2S]-[ferredoxin]. It functions in the pathway protein modification; protein lipoylation via endogenous pathway; protein N(6)-(lipoyl)lysine from octanoyl-[acyl-carrier-protein]: step 2/2. Catalyzes the radical-mediated insertion of two sulfur atoms into the C-6 and C-8 positions of the octanoyl moiety bound to the lipoyl domains of lipoate-dependent enzymes, thereby converting the octanoylated domains into lipoylated derivatives. The polypeptide is Lipoyl synthase (Shewanella sediminis (strain HAW-EB3)).